Reading from the N-terminus, the 287-residue chain is MIKIGAHMPISKGFDRVPKDTIDIGGNSFQIFPHNARSWQAKLPTDEMATKFKREMKKHRIDWENAFCHCGYLVNLASPKEDIWQKSVDLLKTEVEICRKLGIKYLNIHPGSHLGTGEEEGINRIARGLNEVLNNTEDVIILLENVSQKGGNIGYRLEHLKRIIDLVDQKDRVAITYDTCHGFDSGYDITKKEGVESLLSEIENLFGLERLKMIHLNDSKYPLGAAKDRHERIGSGFIGEAGFAVFFSFKEVQRVPWILETPGGNEEHAEDIKKVSEIIEKYRIEVD.

Zn(2+) is bound by residues histidine 69, histidine 109, glutamate 144, aspartate 178, histidine 181, histidine 215, aspartate 228, histidine 230, and glutamate 260.

It belongs to the AP endonuclease 2 family. It depends on Zn(2+) as a cofactor.

It catalyses the reaction Endonucleolytic cleavage to 5'-phosphooligonucleotide end-products.. Its function is as follows. Endonuclease IV plays a role in DNA repair. It cleaves phosphodiester bonds at apurinic or apyrimidinic (AP) sites, generating a 3'-hydroxyl group and a 5'-terminal sugar phosphate. In Thermotoga neapolitana (strain ATCC 49049 / DSM 4359 / NBRC 107923 / NS-E), this protein is Probable endonuclease 4.